The primary structure comprises 259 residues: Exosome complex component Rrp42 (259 aa).

This sequence belongs to the RNase PH family. Rrp42 subfamily. As to quaternary structure, component of the archaeal exosome complex. Forms a hexameric ring-like arrangement composed of 3 Rrp41-Rrp42 heterodimers. The hexameric ring associates with a trimer of Rrp4 and/or Csl4 subunits.

It is found in the cytoplasm. Its function is as follows. Non-catalytic component of the exosome, which is a complex involved in RNA degradation. Contributes to the structuring of the Rrp41 active site. In Archaeoglobus fulgidus (strain ATCC 49558 / DSM 4304 / JCM 9628 / NBRC 100126 / VC-16), this protein is Exosome complex component Rrp42.